A 372-amino-acid chain; its full sequence is Type II methyltransferase M1.HphI (372 aa).

Positions 45–372 (LTYIDLFSGA…EAVLKMNTNE (328 aa)) constitute an SAM-dependent MTase C5-type domain. Cysteine 122 is an active-site residue.

This sequence belongs to the class I-like SAM-binding methyltransferase superfamily. C5-methyltransferase family.

The catalysed reaction is a 2'-deoxycytidine in DNA + S-adenosyl-L-methionine = a 5-methyl-2'-deoxycytidine in DNA + S-adenosyl-L-homocysteine + H(+). Functionally, a methylase that recognizes the double-stranded sequence 5'-GGTGA-3' and protects the DNA from cleavage by the HphI endonuclease. Probably methylates C-2 on the bottom strand. This is Type II methyltransferase M1.HphI (hphIAM) from Haemophilus parahaemolyticus.